We begin with the raw amino-acid sequence, 58 residues long: MDAQKDVQPPKQQPMIYICGECHTENEIKSRDPIRCRECGYRIMYKKRTKRLVVFDAR.

Cys-19, Cys-22, Cys-36, and Cys-39 together coordinate Zn(2+). Residues 19 to 39 (CGECHTENEIKSRDPIRCREC) form a C4-type zinc finger.

It belongs to the archaeal Rpo12/eukaryotic RPC10 RNA polymerase subunit family. Component of the RNA polymerase I (Pol I), RNA polymerase II (Pol II) and RNA polymerase III (Pol III) complexes consisting of at least 13, 12 and 17 subunits, respectively. Pol I complex consists of a ten-subunit catalytic core composed of POLR1A/RPA1, POLR1B/RPA2, POLR1C/RPAC1, POLR1D/RPAC2, POLR1H/RPA12, POLR2E/RPABC1, POLR2F/RPABC2, POLR2H/RPABC3, POLR2K/RPABC4 and POLR2L/RPABC5; a mobile stalk subunit POLR1F/RPA43 protruding from the core and additional subunits homologous to general transcription factors POLR1E/RPA49 and POLR1G/RPA34. Part of Pol I pre-initiation complex (PIC), in which Pol I core assembles with RRN3 and promoter-bound UTBF and SL1/TIF-IB complex. Pol II complex contains a ten-subunit catalytic core composed of POLR2A/RPB1, POLR2B/RPB2, POLR2C/RPB3, POLR2I/RPB9, POLR2J/RPB11, POLR2E/RPABC1, POLR2F/RPABC2, POLR2H/RPABC3, POLR2K/RPABC4 and POLR2L/RPABC5 and a mobile stalk composed of two subunits POLR2D/RPB4 and POLR2G/RPB7. Part of Pol II(G) complex, in which Pol II core associates with an additional subunit POLR2M; unlike conventional Pol II, Pol II(G) functions as a transcriptional repressor. Part of TBP-based Pol II pre-initiation complex (PIC), in which Pol II core assembles with general transcription factors and other specific initiation factors including GTF2E1, GTF2E2, GTF2F1, GTF2F2, TCEA1, ERCC2, ERCC3, GTF2H2, GTF2H3, GTF2H4, GTF2H5, GTF2A1, GTF2A2, GTF2B and TBP; this large multi-subunit PIC complex mediates DNA unwinding and targets Pol II core to the transcription start site where the first phosphodiester bond forms. Pol III complex consists of a ten-subunit catalytic core composed of POLR3A/RPC1, POLR3B/RPC2, POLR1C/RPAC1, POLR1D/RPAC2, POLR3K/RPC10, POLR2E/RPABC1, POLR2F/RPABC2, POLR2H/RPABC3, POLR2K/RPABC4 and POLR2L/RPABC5; a mobile stalk composed of two subunits POLR3H/RPC8 and CRCP/RPC9, protruding from the core and functioning primarily in transcription initiation; and additional subunits homologous to general transcription factors of the RNA polymerase II machinery, POLR3C/RPC3-POLR3F/RPC6-POLR3G/RPC7 heterotrimer required for transcription initiation and POLR3D/RPC4-POLR3E/RPC5 heterodimer involved in both transcription initiation and termination.

Its subcellular location is the nucleus. The protein localises to the nucleolus. Its function is as follows. DNA-dependent RNA polymerase catalyzes the transcription of DNA into RNA using the four ribonucleoside triphosphates as substrates. Common component of RNA polymerases I, II and III which synthesize ribosomal RNA precursors, mRNA precursors and many functional non-coding RNAs, and a small RNAs, such as 5S rRNA and tRNAs, respectively. The chain is DNA-directed RNA polymerases I, II, and III subunit RPABC4 (Polr2k) from Mus musculus (Mouse).